Consider the following 396-residue polypeptide: Elongation factor Tu (396 aa).

Residues 10 to 205 (KPHVNIGTIG…AVDESIPDPV (196 aa)) form the tr-type G domain. Residues 19-26 (GHVDHGKT) are G1. Residue 19-26 (GHVDHGKT) coordinates GTP. Residue T26 participates in Mg(2+) binding. The interval 62 to 66 (GITIN) is G2. The G3 stretch occupies residues 83–86 (DAPG). Residues 83–87 (DAPGH) and 138–141 (NKAD) contribute to the GTP site. The G4 stretch occupies residues 138–141 (NKAD). Positions 175–177 (SAL) are G5.

This sequence belongs to the TRAFAC class translation factor GTPase superfamily. Classic translation factor GTPase family. EF-Tu/EF-1A subfamily. In terms of assembly, monomer.

Its subcellular location is the cytoplasm. It carries out the reaction GTP + H2O = GDP + phosphate + H(+). Functionally, GTP hydrolase that promotes the GTP-dependent binding of aminoacyl-tRNA to the A-site of ribosomes during protein biosynthesis. This Rhodococcus erythropolis (strain PR4 / NBRC 100887) protein is Elongation factor Tu.